A 417-amino-acid chain; its full sequence is Imidazolonepropionase (417 aa).

Histidine 77 and histidine 79 together coordinate Fe(3+). Residues histidine 77 and histidine 79 each contribute to the Zn(2+) site. 4-imidazolone-5-propanoate is bound by residues arginine 86, tyrosine 149, and histidine 182. Residue tyrosine 149 participates in N-formimidoyl-L-glutamate binding. Residue histidine 247 participates in Fe(3+) binding. Histidine 247 contacts Zn(2+). Glutamine 250 provides a ligand contact to 4-imidazolone-5-propanoate. Residue aspartate 322 participates in Fe(3+) binding. Aspartate 322 is a binding site for Zn(2+). Asparagine 324 and glycine 326 together coordinate N-formimidoyl-L-glutamate. A 4-imidazolone-5-propanoate-binding site is contributed by threonine 327.

Belongs to the metallo-dependent hydrolases superfamily. HutI family. Requires Zn(2+) as cofactor. Fe(3+) serves as cofactor.

The protein localises to the cytoplasm. It catalyses the reaction 4-imidazolone-5-propanoate + H2O = N-formimidoyl-L-glutamate. Its pathway is amino-acid degradation; L-histidine degradation into L-glutamate; N-formimidoyl-L-glutamate from L-histidine: step 3/3. Functionally, catalyzes the hydrolytic cleavage of the carbon-nitrogen bond in imidazolone-5-propanoate to yield N-formimidoyl-L-glutamate. It is the third step in the universal histidine degradation pathway. This Cupriavidus taiwanensis (strain DSM 17343 / BCRC 17206 / CCUG 44338 / CIP 107171 / LMG 19424 / R1) (Ralstonia taiwanensis (strain LMG 19424)) protein is Imidazolonepropionase.